A 333-amino-acid polypeptide reads, in one-letter code: HTH-type transcriptional repressor PurR (333 aa).

Positions Ala-2–Val-56 constitute an HTH lacI-type domain. The H-T-H motif DNA-binding region spans Ile-4–Asn-23. The DNA-binding element occupies Ser-48–Val-56. Positions 73, 189, 191, 220, and 274 each coordinate hypoxanthine.

In terms of assembly, homodimer.

It functions in the pathway purine metabolism; purine nucleotide biosynthesis [regulation]. Functionally, is the main repressor of the genes involved in the de novo synthesis of purine nucleotides, regulating purB, purC, purEK, purF, purHD, purL, purMN and guaBA expression. PurR is allosterically activated to bind its cognate DNA by binding the purine corepressors, hypoxanthine or guanine, thereby effecting transcription repression. This Histophilus somni (strain 2336) (Haemophilus somnus) protein is HTH-type transcriptional repressor PurR.